Here is a 411-residue protein sequence, read N- to C-terminus: Tyrosine--tRNA ligase (411 aa).

The 'HIGH' region signature appears at 48–57 (PTAPDIHLGH). Positions 232 to 236 (KMSKS) match the 'KMSKS' region motif. Lys-235 serves as a coordination point for ATP. Residues 347–409 (VLLPKVLFSA…GKRRFLKIIF (63 aa)) form the S4 RNA-binding domain.

This sequence belongs to the class-I aminoacyl-tRNA synthetase family. TyrS type 2 subfamily. In terms of assembly, homodimer.

The protein resides in the cytoplasm. It carries out the reaction tRNA(Tyr) + L-tyrosine + ATP = L-tyrosyl-tRNA(Tyr) + AMP + diphosphate + H(+). In terms of biological role, catalyzes the attachment of tyrosine to tRNA(Tyr) in a two-step reaction: tyrosine is first activated by ATP to form Tyr-AMP and then transferred to the acceptor end of tRNA(Tyr). This chain is Tyrosine--tRNA ligase, found in Carboxydothermus hydrogenoformans (strain ATCC BAA-161 / DSM 6008 / Z-2901).